The chain runs to 378 residues: Chaperone protein DnaJ (378 aa).

In terms of domain architecture, J spans 5–69; sequence EYYDRLGVSK…QKRAAYDQYG (65 aa). The segment at 134–216 adopts a CR-type zinc-finger fold; sequence GVEKEVSYNR…CHGTGHEKQA (83 aa). Residues C147, C150, C164, C167, C190, C193, C204, and C207 each coordinate Zn(2+). CXXCXGXG motif repeat units lie at residues 147–154, 164–171, 190–197, and 204–211; these read CGTCLGSG, CRKCHGSG, CDICHGSG, and CQTCHGTG.

Belongs to the DnaJ family. In terms of assembly, homodimer. The cofactor is Zn(2+).

It localises to the cytoplasm. Its function is as follows. Participates actively in the response to hyperosmotic and heat shock by preventing the aggregation of stress-denatured proteins and by disaggregating proteins, also in an autonomous, DnaK-independent fashion. Unfolded proteins bind initially to DnaJ; upon interaction with the DnaJ-bound protein, DnaK hydrolyzes its bound ATP, resulting in the formation of a stable complex. GrpE releases ADP from DnaK; ATP binding to DnaK triggers the release of the substrate protein, thus completing the reaction cycle. Several rounds of ATP-dependent interactions between DnaJ, DnaK and GrpE are required for fully efficient folding. Also involved, together with DnaK and GrpE, in the DNA replication of plasmids through activation of initiation proteins. The protein is Chaperone protein DnaJ of Streptococcus pyogenes.